The sequence spans 367 residues: 4-hydroxy-3-methylbut-2-en-1-yl diphosphate synthase (flavodoxin) (367 aa).

Cys270, Cys273, Cys305, and Glu312 together coordinate [4Fe-4S] cluster.

It belongs to the IspG family. [4Fe-4S] cluster is required as a cofactor.

It carries out the reaction (2E)-4-hydroxy-3-methylbut-2-enyl diphosphate + oxidized [flavodoxin] + H2O + 2 H(+) = 2-C-methyl-D-erythritol 2,4-cyclic diphosphate + reduced [flavodoxin]. It participates in isoprenoid biosynthesis; isopentenyl diphosphate biosynthesis via DXP pathway; isopentenyl diphosphate from 1-deoxy-D-xylulose 5-phosphate: step 5/6. In terms of biological role, converts 2C-methyl-D-erythritol 2,4-cyclodiphosphate (ME-2,4cPP) into 1-hydroxy-2-methyl-2-(E)-butenyl 4-diphosphate. The polypeptide is 4-hydroxy-3-methylbut-2-en-1-yl diphosphate synthase (flavodoxin) (Buchnera aphidicola subsp. Schizaphis graminum (strain Sg)).